We begin with the raw amino-acid sequence, 224 residues long: MNPAWALLRLASPQLPIGGYSYSQGLEMAVDNGRVDSPDSARRWISDQLLLNLARFEAPLLLAHCQAAADEHWDELRKLCESHRASRETRELHLESRQMGYSLQQLLNGLPELDQPARDFLEHCAEPHLALCWALAARAWQISPQDALAAWLWSWLENQLAVLMKTLPLGQQAAQRLTSELLPLLQQAQQDATRINPEHLGSAAFGLSLACMAHERQYSRLFRS.

Belongs to the UreF family. UreD, UreF and UreG form a complex that acts as a GTP-hydrolysis-dependent molecular chaperone, activating the urease apoprotein by helping to assemble the nickel containing metallocenter of UreC. The UreE protein probably delivers the nickel.

The protein localises to the cytoplasm. Its function is as follows. Required for maturation of urease via the functional incorporation of the urease nickel metallocenter. The protein is Urease accessory protein UreF of Pseudomonas fluorescens (strain Pf0-1).